The sequence spans 145 residues: Early nodulin-like protein 21 (145 aa).

The first 17 residues, 1–17, serve as a signal peptide directing secretion; the sequence is MFLWLVIVLTISASVSS. The region spanning 18-116 is the Phytocyanin domain; the sequence is YEHKLNWVVP…GQKMIVEVIS (99 aa). N-linked (GlcNAc...) asparagine glycans are attached at residues asparagine 30 and asparagine 71. Cysteine 70 and cysteine 104 are disulfide-bonded. Serine 116 carries the GPI-anchor amidated serine lipid modification. Positions 117-145 are cleaved as a propeptide — removed in mature form; sequence RDHTTTSAAPPAAFAVLLCFFSLSLYFVA.

The protein belongs to the early nodulin-like (ENODL) family. In terms of tissue distribution, mostly expressed in leaves and flowers, and, to a lower extent, in roots and stems, but barely in seedlings and seeds.

It is found in the cell membrane. Functionally, may act as a carbohydrate transporter. This Arabidopsis thaliana (Mouse-ear cress) protein is Early nodulin-like protein 21.